We begin with the raw amino-acid sequence, 363 residues long: NADH-quinone oxidoreductase subunit H (363 aa).

10 consecutive transmembrane segments (helical) span residues 29–49 (VLKI…YVVW), 62–82 (GPMY…KLLF), 96–116 (FIIA…VVPF), 127–147 (VGLL…ILAG), 163–183 (AAQV…VMIA), 202–222 (FFDW…VSGV), 239–257 (IVAG…LFFL), 264–286 (ILVS…QGWV), 299–319 (TGGW…YIWF), and 339–359 (FIPL…YGVI).

It belongs to the complex I subunit 1 family. NDH-1 is composed of 14 different subunits. Subunits NuoA, H, J, K, L, M, N constitute the membrane sector of the complex.

The protein localises to the cell inner membrane. It catalyses the reaction a quinone + NADH + 5 H(+)(in) = a quinol + NAD(+) + 4 H(+)(out). Its function is as follows. NDH-1 shuttles electrons from NADH, via FMN and iron-sulfur (Fe-S) centers, to quinones in the respiratory chain. The immediate electron acceptor for the enzyme in this species is believed to be ubiquinone. Couples the redox reaction to proton translocation (for every two electrons transferred, four hydrogen ions are translocated across the cytoplasmic membrane), and thus conserves the redox energy in a proton gradient. This subunit may bind ubiquinone. In Xanthomonas campestris pv. campestris (strain 8004), this protein is NADH-quinone oxidoreductase subunit H.